The chain runs to 159 residues: CASP-like protein 5C1 (159 aa).

Over Met-1–Arg-6 the chain is Cytoplasmic. The helical transmembrane segment at Ser-7–Phe-29 threads the bilayer. The Extracellular portion of the chain corresponds to Ser-30–Ala-48. The helical transmembrane segment at Phe-49–Ile-69 threads the bilayer. The Cytoplasmic portion of the chain corresponds to Asp-70–Cys-94. The helical transmembrane segment at Ala-95 to Leu-117 threads the bilayer. Topologically, residues His-118–Ala-134 are extracellular. The helical transmembrane segment at Met-135–Val-155 threads the bilayer. Topologically, residues Ala-156–Trp-159 are cytoplasmic.

The protein belongs to the Casparian strip membrane proteins (CASP) family. Homodimer and heterodimers.

It is found in the cell membrane. This chain is CASP-like protein 5C1, found in Zea mays (Maize).